Reading from the N-terminus, the 696-residue chain is DNA topoisomerase 6 subunit B (696 aa).

A disordered region spans residues 1-36; sequence MDDDAGDGAASGGTKRKVTAASSSAAAKGKAAGKGK. Residues 20-36 are compositionally biased toward low complexity; sequence AASSSAAAKGKAAGKGK. ATP-binding positions include Asn-88, Asp-187, 208-209, 217-224, and Lys-543; these read TK and GKFGLGAK.

This sequence belongs to the TOP6B family. As to quaternary structure, homodimer. Heterotetramer of two TOP6A and two TOP6B subunits. Interacts with SPO11-4.

The protein resides in the nucleus. It carries out the reaction ATP-dependent breakage, passage and rejoining of double-stranded DNA.. Its function is as follows. Component of the DNA topoisomerase VI involved in chromatin organization and progression of endoreduplication cycles. Relaxes both positive and negative superturns and exhibits a strong decatenase activity. The B subunit binds ATP. This chain is DNA topoisomerase 6 subunit B (TOP6B), found in Oryza sativa subsp. japonica (Rice).